Here is a 102-residue protein sequence, read N- to C-terminus: Large ribosomal subunit protein uL24 (102 aa).

The protein belongs to the universal ribosomal protein uL24 family. Part of the 50S ribosomal subunit.

Functionally, one of two assembly initiator proteins, it binds directly to the 5'-end of the 23S rRNA, where it nucleates assembly of the 50S subunit. In terms of biological role, one of the proteins that surrounds the polypeptide exit tunnel on the outside of the subunit. The sequence is that of Large ribosomal subunit protein uL24 from Alcanivorax borkumensis (strain ATCC 700651 / DSM 11573 / NCIMB 13689 / SK2).